We begin with the raw amino-acid sequence, 383 residues long: Pyruvate synthase subunit PorA (383 aa).

As to quaternary structure, heterotetramer of one alpha, one beta, one delta and one gamma chain.

It catalyses the reaction 2 oxidized [2Fe-2S]-[ferredoxin] + pyruvate + CoA = 2 reduced [2Fe-2S]-[ferredoxin] + acetyl-CoA + CO2 + H(+). This is Pyruvate synthase subunit PorA (porA) from Methanothermobacter thermautotrophicus (strain ATCC 29096 / DSM 1053 / JCM 10044 / NBRC 100330 / Delta H) (Methanobacterium thermoautotrophicum).